Here is a 474-residue protein sequence, read N- to C-terminus: 3-isopropylmalate dehydratase large subunit (474 aa).

The [4Fe-4S] cluster site is built by C355, C415, and C418.

The protein belongs to the aconitase/IPM isomerase family. LeuC type 1 subfamily. In terms of assembly, heterodimer of LeuC and LeuD. It depends on [4Fe-4S] cluster as a cofactor.

It carries out the reaction (2R,3S)-3-isopropylmalate = (2S)-2-isopropylmalate. Its pathway is amino-acid biosynthesis; L-leucine biosynthesis; L-leucine from 3-methyl-2-oxobutanoate: step 2/4. Catalyzes the isomerization between 2-isopropylmalate and 3-isopropylmalate, via the formation of 2-isopropylmaleate. This Shewanella oneidensis (strain ATCC 700550 / JCM 31522 / CIP 106686 / LMG 19005 / NCIMB 14063 / MR-1) protein is 3-isopropylmalate dehydratase large subunit.